The primary structure comprises 937 residues: Proprotein convertase subtilisin/kexin type 6 (937 aa).

Pro residues predominate over residues 1-16 (MPPRAPPAPGPRPPPR). Residues 1–22 (MPPRAPPAPGPRPPPRAAGRHG) are disordered. Positions 1–45 (MPPRAPPAPGPRPPPRAAGRHGLSPLAPRPWRWLLLLALPAVCSA) are cleaved as a signal peptide. The propeptide occupies 46–132 (LPPPRPVYTN…QQEVKRRVKR (87 aa)). The region spanning 149-468 (MWYMHCADKN…FGLVDAEALV (320 aa)) is the Peptidase S8 domain. Active-site charge relay system residues include Asp-186 and His-227. N-linked (GlcNAc...) asparagine glycosylation is present at Asn-240. Ser-401 acts as the Charge relay system in catalysis. Positions 476–616 (AVPSQHMCVA…SLILYGTAEH (141 aa)) constitute a P/Homo B domain. The Cell attachment site signature appears at 534–536 (RGD). The segment at 621–656 (FSSHQSRSRMLELSVPEQEPLKAEGPPPQAETPEEE) is disordered. 5 FU repeats span residues 660 to 707 (TGVC…GYFG), 711 to 758 (ARRC…GLYA), 762 to 806 (QRLC…GTYF), 810 to 855 (LIRC…GFYP), and 863 to 911 (HKVC…ETFC). The segment at 680–898 (CLNCVHFSLG…GFTQLGTSCI (219 aa)) is CRM (Cys-rich motif). Asn-882 and Asn-900 each carry an N-linked (GlcNAc...) asparagine glycan. A PLAC domain is found at 899 to 937 (TNHTCSNADETFCEMVKSNRLCERKLFIQFCCRTCLLAG).

It belongs to the peptidase S8 family. In terms of assembly, the precursor protein seems to exist in the reticulum endoplasmic as both a monomer and a dimer-sized complex whereas mature form exists only as a monomer, suggesting that propeptide cleavage affects its tertiary or quaternary structure. Interacts (immature form including the propeptide) with RCN3; probably involved in the maturation and the secretion of PCSK6. The cofactor is Ca(2+). In terms of tissue distribution, high expression in the anterior pituitary and in several brain regions, the atrium, and the ventricle.

Serine endoprotease that processes various proproteins by cleavage at paired basic amino acids, recognizing the RXXX[KR]R consensus motif. Likely functions in the constitutive secretory pathway, with unique restricted distribution in both neuroendocrine and non-neuroendocrine tissues. The chain is Proprotein convertase subtilisin/kexin type 6 (Pcsk6) from Rattus norvegicus (Rat).